The chain runs to 235 residues: Serine protease SplA (235 aa).

An N-terminal signal peptide occupies residues 1 to 35 (MNKNVMVKGLTALDILTSLGCAENISDQPHSIAKA). Catalysis depends on charge relay system residues H74, D113, and S189.

It belongs to the peptidase S1B family.

It is found in the secreted. The chain is Serine protease SplA (splA) from Staphylococcus aureus.